We begin with the raw amino-acid sequence, 276 residues long: Large ribosomal subunit protein uL2c (276 aa).

Disordered stretches follow at residues 1 to 51 (MAIR…GIIT) and 224 to 276 (VVMN…RRRK). Polar residues-rich tracts occupy residues 7-18 (RTYTPSTRNRPI) and 27-37 (SNPQKKLTSGQ).

This sequence belongs to the universal ribosomal protein uL2 family. Part of the 50S ribosomal subunit.

The protein localises to the plastid. Its subcellular location is the chloroplast. This is Large ribosomal subunit protein uL2c (rpl2) from Cycas taitungensis (Prince sago).